A 155-amino-acid chain; its full sequence is Protein-export protein SecB (155 aa).

The protein belongs to the SecB family. Homotetramer, a dimer of dimers. One homotetramer interacts with 1 SecA dimer.

It is found in the cytoplasm. Functionally, one of the proteins required for the normal export of preproteins out of the cell cytoplasm. It is a molecular chaperone that binds to a subset of precursor proteins, maintaining them in a translocation-competent state. It also specifically binds to its receptor SecA. This Cronobacter sakazakii (strain ATCC BAA-894) (Enterobacter sakazakii) protein is Protein-export protein SecB.